A 429-amino-acid polypeptide reads, in one-letter code: MSKSLQAIRGMNDILPEQTPAWRYLERTFAGLLDGYGYSEIRLPILEFTELFARGIGEGTDVVDKEMYTFLDRNGESLTMRPEGTAGCVRAVLEHGLSGGGQVQKLWYTGPMFRYEKPQKGRYRQFHQIGVEVFNLPGPDIDAELIILTWRLWQKLGMADAVTLQLNTLGSSEARARYREALVAYLQERFEQLDEDSQRRMTTNPLRILDSKVESTQALLVGAPTLHDYLDEESIAHFEGLKARLDAVGLRYEINQKLVRGLDYYCRTAFEWVTDKLGAQGTVCGGGRYDGLVSQFGGKPTPGVGFAMGVERLVLLLETLGVIPAELNRPADLYVCAFGEPAELAALTLAEQLRSAIPGIRLLVNAGAGSFKSQFKKADKSGARFALILGEDEVANRVVGFKPLRDEGEQQSIAWDALPEHLAACLEQA.

It belongs to the class-II aminoacyl-tRNA synthetase family. As to quaternary structure, homodimer.

It is found in the cytoplasm. It carries out the reaction tRNA(His) + L-histidine + ATP = L-histidyl-tRNA(His) + AMP + diphosphate + H(+). The protein is Histidine--tRNA ligase of Pseudomonas aeruginosa (strain LESB58).